Here is a 220-residue protein sequence, read N- to C-terminus: Uracil-DNA glycosylase (220 aa).

The Proton acceptor role is filled by aspartate 60.

Belongs to the uracil-DNA glycosylase (UDG) superfamily. UNG family.

It localises to the cytoplasm. The catalysed reaction is Hydrolyzes single-stranded DNA or mismatched double-stranded DNA and polynucleotides, releasing free uracil.. Its function is as follows. Excises uracil residues from the DNA which can arise as a result of misincorporation of dUMP residues by DNA polymerase or due to deamination of cytosine. The polypeptide is Uracil-DNA glycosylase (Francisella tularensis subsp. holarctica (strain FTNF002-00 / FTA)).